Here is a 568-residue protein sequence, read N- to C-terminus: Proline--tRNA ligase (568 aa).

Belongs to the class-II aminoacyl-tRNA synthetase family. ProS type 1 subfamily. As to quaternary structure, homodimer.

The protein resides in the cytoplasm. It carries out the reaction tRNA(Pro) + L-proline + ATP = L-prolyl-tRNA(Pro) + AMP + diphosphate. Catalyzes the attachment of proline to tRNA(Pro) in a two-step reaction: proline is first activated by ATP to form Pro-AMP and then transferred to the acceptor end of tRNA(Pro). As ProRS can inadvertently accommodate and process non-cognate amino acids such as alanine and cysteine, to avoid such errors it has two additional distinct editing activities against alanine. One activity is designated as 'pretransfer' editing and involves the tRNA(Pro)-independent hydrolysis of activated Ala-AMP. The other activity is designated 'posttransfer' editing and involves deacylation of mischarged Ala-tRNA(Pro). The misacylated Cys-tRNA(Pro) is not edited by ProRS. This chain is Proline--tRNA ligase, found in Listeria innocua serovar 6a (strain ATCC BAA-680 / CLIP 11262).